Here is a 334-residue protein sequence, read N- to C-terminus: Glycerol-3-phosphate dehydrogenase [NAD(P)+] (334 aa).

The NADPH site is built by Tyr-14 and Lys-108. Sn-glycerol 3-phosphate-binding residues include Lys-108, Gly-140, and Ser-142. An NADPH-binding site is contributed by Ala-144. Residues Lys-195, Asp-248, Ser-258, Arg-259, and Asn-260 each contribute to the sn-glycerol 3-phosphate site. The Proton acceptor role is filled by Lys-195. Position 259 (Arg-259) interacts with NADPH. Glu-285 contacts NADPH.

The protein belongs to the NAD-dependent glycerol-3-phosphate dehydrogenase family.

It is found in the cytoplasm. It catalyses the reaction sn-glycerol 3-phosphate + NAD(+) = dihydroxyacetone phosphate + NADH + H(+). The enzyme catalyses sn-glycerol 3-phosphate + NADP(+) = dihydroxyacetone phosphate + NADPH + H(+). It participates in membrane lipid metabolism; glycerophospholipid metabolism. In terms of biological role, catalyzes the reduction of the glycolytic intermediate dihydroxyacetone phosphate (DHAP) to sn-glycerol 3-phosphate (G3P), the key precursor for phospholipid synthesis. The chain is Glycerol-3-phosphate dehydrogenase [NAD(P)+] from Mesoplasma florum (strain ATCC 33453 / NBRC 100688 / NCTC 11704 / L1) (Acholeplasma florum).